Reading from the N-terminus, the 287-residue chain is Arylamine N-acetyltransferase, liver isozyme (287 aa).

Cys-68 functions as the Acyl-thioester intermediate in the catalytic mechanism. Residues His-107 and Asp-122 contribute to the active site.

Belongs to the arylamine N-acetyltransferase family.

It carries out the reaction an arylamine + acetyl-CoA = an N-acetylarylamine + CoA. This chain is Arylamine N-acetyltransferase, liver isozyme, found in Gallus gallus (Chicken).